The following is a 507-amino-acid chain: Anthranilate synthase component 1 (507 aa).

S65 contributes to the L-tryptophan binding site. S81 bears the Phosphoserine mark. T223 is modified (phosphothreonine). Residue 280–282 coordinates L-tryptophan; the sequence is PYL. 316–317 contributes to the chorismate binding site; it reads GT. Mg(2+) is bound at residue E343. Residues Y431, R452, 466–468, and G468 contribute to the chorismate site; that span reads GGG. E481 contacts Mg(2+).

The protein belongs to the anthranilate synthase component I family. As to quaternary structure, tetramer of two components I and two components II. Requires Mg(2+) as cofactor.

The catalysed reaction is chorismate + L-glutamine = anthranilate + pyruvate + L-glutamate + H(+). It participates in amino-acid biosynthesis; L-tryptophan biosynthesis; L-tryptophan from chorismate: step 1/5. The protein is Anthranilate synthase component 1 (TRP2) of Saccharomyces cerevisiae (strain ATCC 204508 / S288c) (Baker's yeast).